Reading from the N-terminus, the 742-residue chain is Protein-lysine N-methyltransferase SMYD4 (742 aa).

110–112 (RSA) provides a ligand contact to S-adenosyl-L-methionine. Residues 230-569 (SSLSLNFSTE…SGQEIFHCYG (340 aa)) enclose the SET domain. 8 residues coordinate Zn(2+): C295, C298, C308, C311, C317, C321, H330, and C334. Residues 295-334 (CHHCLKQLLASIPCCGCSYAKYCSQNCADVAWEQYHRTEC) form an MYND-type zinc finger. S-adenosyl-L-methionine is bound by residues N418, 534 to 535 (NH), and Y568.

Belongs to the class V-like SAM-binding methyltransferase superfamily.

Its subcellular location is the nucleus. It localises to the cytoplasm. It catalyses the reaction L-lysyl-[protein] + S-adenosyl-L-methionine = N(6)-methyl-L-lysyl-[protein] + S-adenosyl-L-homocysteine + H(+). Its function is as follows. Protein-lysine N-methyltransferase. Monomethylates PRMT5, modulating its transcriptional activity. May also act as a histone methyltransferase. Plays a critical role in cardiac development. Acts as a key epigenetic regulator of gene expression during cardiac development via its dual activities as a methyltransferase and negative regulator of HDAC1. The sequence is that of Protein-lysine N-methyltransferase SMYD4 (SMYD4) from Gallus gallus (Chicken).